A 407-amino-acid polypeptide reads, in one-letter code: Argininosuccinate synthase (407 aa).

Residues 10–18 (AYSGGLDTS) and alanine 37 contribute to the ATP site. 2 residues coordinate L-citrulline: tyrosine 90 and serine 95. Glycine 120 provides a ligand contact to ATP. Residues threonine 122, asparagine 126, and aspartate 127 each contribute to the L-aspartate site. Asparagine 126 contacts L-citrulline. Residues arginine 130, serine 181, serine 190, glutamate 266, and tyrosine 278 each coordinate L-citrulline.

The protein belongs to the argininosuccinate synthase family. Type 1 subfamily. Homotetramer.

It localises to the cytoplasm. The catalysed reaction is L-citrulline + L-aspartate + ATP = 2-(N(omega)-L-arginino)succinate + AMP + diphosphate + H(+). It participates in amino-acid biosynthesis; L-arginine biosynthesis; L-arginine from L-ornithine and carbamoyl phosphate: step 2/3. This is Argininosuccinate synthase from Ruegeria sp. (strain TM1040) (Silicibacter sp.).